Reading from the N-terminus, the 510-residue chain is Archaeosine synthase subunit alpha (510 aa).

One can recognise a PUA domain in the interval 427 to 510 (LGKFTINKAS…LKKGIAVKVR (84 aa)).

This sequence belongs to the archaeosine synthase type 1 family. Forms a robust complex with the archaeosine synthase beta subunit RaSEA, likely an alpha(2)beta(2) heterotetrameric structure. Formation of this complex highly increases lysine transfer activity.

The enzyme catalyses 7-cyano-7-carbaguanosine(15) in tRNA + L-lysine = 7-N-[(5S)-5-amino-5-carboxypentyl]formamidino-7-deazaguanosine(15) in tRNA. It functions in the pathway tRNA modification; archaeosine-tRNA biosynthesis. Functions in the biosynthesis of archaeosine, a modified nucleoside present in the dihydrouridine loop (D-loop) of archaeal tRNAs. Catalyzes the addition of L-lysine to the cyano group of 7-cyano-7-deazaguanine (preQ0)-modified tRNAs at position 15, to generate q0kN15-tRNA, a q0N lysine adduct identified as 7-N-[(5S)-5-amino-5-carboxypentyl]formamidino-7-deazaguanosine. The polypeptide is Archaeosine synthase subunit alpha (Thermoplasma acidophilum (strain ATCC 25905 / DSM 1728 / JCM 9062 / NBRC 15155 / AMRC-C165)).